A 117-amino-acid polypeptide reads, in one-letter code: Serine rich endogenous peptide 5 (117 aa).

The signal sequence occupies residues Met1–Ala31. The SCOOP motif motif lies at Leu41–Tyr55. The span at Gln42–Arg51 shows a compositional bias: basic residues. The disordered stretch occupies residues Gln42–Thr117. Residues Ser47–Ser49 carry the SxS motif essential for MIK2 binding motif. A compositionally biased stretch (pro residues) spans Leu60–Gln84.

In terms of assembly, interacts with MIK2 (via extracellular leucine-rich repeat domain); this interaction triggers the formation of complex between MIK2 and the BAK1/SERK3 and SERK4 coreceptors, and subsequent BAK1 activation by phosphorylation.

It localises to the cell membrane. It is found in the secreted. Its subcellular location is the extracellular space. The protein resides in the apoplast. Its function is as follows. Brassicaceae-specific phytocytokine (plant endogenous peptide released into the apoplast) perceived by MIK2 in a BAK1/SERK3 and SERK4 coreceptors-dependent manner, that modulates various physiological and antimicrobial processes including growth prevention and reactive oxygen species (ROS) response regulation. This Arabidopsis thaliana (Mouse-ear cress) protein is Serine rich endogenous peptide 5.